The primary structure comprises 77 residues: U11-lycotoxin-Ls1b (77 aa).

Positions 1–20 (MKLIIFTGLALFAIVSLIEA) are cleaved as a signal peptide. The propeptide occupies 21–26 (EEESGR).

The protein belongs to the neurotoxin 19 (CSTX) family. 10 (U11-Lctx) subfamily. Contains 4 disulfide bonds. Expressed by the venom gland.

The protein localises to the secreted. This chain is U11-lycotoxin-Ls1b, found in Lycosa singoriensis (Wolf spider).